A 4043-amino-acid polypeptide reads, in one-letter code: Polyketide synthase-nonribosomal peptide synthetase (4043 aa).

The 439-residue stretch at 8 to 446 (SEPIAIIGTG…GANSHAILES (439 aa)) folds into the Ketosynthase family 3 (KS3) domain. Active-site for beta-ketoacyl synthase activity residues include Cys-181, His-320, and His-366. Residues 557–877 (VFTGQGAQWA…SRGNSDVEAF (321 aa)) are acyl transferase. The tract at residues 944-1078 (NELLGRQVLD…CRLRITVGDS (135 aa)) is N-terminal hotdog fold. One can recognise a PKS/mFAS DH domain in the interval 944 to 1246 (NELLGRQVLD…TQPLSSPTEA (303 aa)). Residues 945-1243 (ELLGRQVLDG…GLQTQPLSSP (299 aa)) are dehydratase (DH) domain. Residue His-976 is the Proton acceptor; for dehydratase activity of the active site. The C-terminal hotdog fold stretch occupies residues 1093–1246 (LLEVESDRFY…TQPLSSPTEA (154 aa)). The Proton donor; for dehydratase activity role is filled by Asp-1154. Positions 1400–1585 (RYTKYLAAMA…GIETAIPHHD (186 aa)) are methyltransferase (MT) domain. The interval 2115-2288 (TYWLVGLTGG…NASAVHIGAI (174 aa)) is ketoreductase (KR)domain. Residues 2394–2475 (SSSADIYDII…EMVTQAQELL (82 aa)) form the Carrier 1 domain. The interval 2395-2472 (SSADIYDIIS…TVGEMVTQAQ (78 aa)) is peptidyl carrier protein. Ser-2435 bears the O-(pantetheine 4'-phosphoryl)serine mark. Disordered regions lie at residues 2476–2575 (PKEL…DPSR) and 2587–2630 (EKHL…SQII). Polar residues-rich tracts occupy residues 2494–2512 (PKNT…QLQN) and 2520–2534 (ALSQ…NMIK). The segment covering 2537 to 2550 (PPKEAEAKQPRPEV) has biased composition (basic and acidic residues). Residues 2617-2627 (TSSSSSSTSAS) show a composition bias toward low complexity. The tract at residues 2640–3069 (KSVPMAFGQS…NPALRLNVPP (430 aa)) is condensation. The interval 3102 to 3502 (EIVERYPTHV…EGNLILGGRI (401 aa)) is adenylation. Residues 3617–3697 (TDESPSMAKM…GMVSLIDHSE (81 aa)) form the Carrier 2 domain. The thiolation stretch occupies residues 3622–3694 (SMAKMRDVWA…SLTGMVSLID (73 aa)). O-(pantetheine 4'-phosphoryl)serine is present on Ser-3657. The tract at residues 3735 to 3954 (LTGATGFLGR…DFVSADRVAM (220 aa)) is reductase-like.

In the C-terminal section; belongs to the NRP synthetase family.

Its pathway is mycotoxin biosynthesis. Its function is as follows. Hybrid PKS-NRPS synthetase; part of the gene cluster that mediates the biosynthesis of the mycotoxins cytochalasins E and K. The hybrid PKS-NRPS synthetase ccsA and the enoyl reductase ccsC are responsible for fusion of phenylalanine with an octaketide backbone and subsequent release of the stable tetramic acid precursor. The polyketide synthase module (PKS) of the PKS-NRPS ccsA is responsible for the synthesis of the octaketide backbone. The downstream nonribosomal peptide synthetase (NRPS) amidates the carboxyl end of the octaketide with a phenylalanine. A reductase-like domain (R) at the C-terminus catalyzes the reductive release of the polyketide-amino acid intermediate. Because ccsA lacks a designated enoylreductase (ER) domain, the required activity is provided the enoyl reductase ccsC. Upon formation of the 11-membered carbocycle-fused perhydroisoindolone intermediate, a number of oxidative steps are required to afford the final cytochalasin E and K, including two hydroxylations at C17 and C18, one alcohol oxidation at C17, one epoxidation at C6 and C7 and two Baeyer-Villiger oxidations. The oxidative modification at C17, C18 and the C6-C7 epoxidation are likely to be catalyzed by the two cytochrome P450 oxygenases ccsD and ccsG. CcsD may be responsible for the epoxidation of the C6-C7 double bond. CcsG may be responsible for the successive oxidative modifications at C17 and C18. The double Baeyer-Villiger oxidations of ketocytochalasin to precytochalasin and cytochalasin Z(16) are among the final steps leading to cytochalasin E and K and are catalyzed by ccsB. The first oxygen insertion step follows that of the classic BVMO mechanism, generating the ester precytochalasin. Release of precytochalasin into an aqueous environment can generate the shunt product iso-precytochalasin through spontaneous isomerization. Alternatively, precytochalasin can undergo further oxidation by ccsB to yield the in-line carbonate-containing cytochalasin Z(16). Cytochalasin Z(16) is a precursor to cytochalasin E and cytochalasin K, whereas iso-precytochalasin is a precursor to cytochalasin Z(17) and rosellichalasin. The hydrolyase ccsE may catalyze hydrolysis of epoxide bond in cytochalasin E to afford cytochalasin K. The function of ccsF has not been assigned but it may play a role in post-PKS-NRPS biosynthetic step, resistance or transport of cytochalasins and related PKS-NRPS products. In Aspergillus clavatus (strain ATCC 1007 / CBS 513.65 / DSM 816 / NCTC 3887 / NRRL 1 / QM 1276 / 107), this protein is Polyketide synthase-nonribosomal peptide synthetase.